A 432-amino-acid chain; its full sequence is Adenylosuccinate synthetase (432 aa).

GTP is bound by residues 12–18 (GDEGKGK) and 40–42 (GHT). D13 functions as the Proton acceptor in the catalytic mechanism. Mg(2+) contacts are provided by D13 and G40. IMP is bound by residues 13-16 (DEGK), 38-41 (NAGH), T132, R146, Q226, T241, and R305. The Proton donor role is filled by H41. 301-307 (TVTGRKR) is a binding site for substrate. GTP is bound by residues R307, 333-335 (KLD), and 415-417 (STS).

Belongs to the adenylosuccinate synthetase family. Homodimer. Mg(2+) serves as cofactor.

The protein resides in the cytoplasm. The catalysed reaction is IMP + L-aspartate + GTP = N(6)-(1,2-dicarboxyethyl)-AMP + GDP + phosphate + 2 H(+). It functions in the pathway purine metabolism; AMP biosynthesis via de novo pathway; AMP from IMP: step 1/2. Functionally, plays an important role in the de novo pathway of purine nucleotide biosynthesis. Catalyzes the first committed step in the biosynthesis of AMP from IMP. This chain is Adenylosuccinate synthetase, found in Sinorhizobium medicae (strain WSM419) (Ensifer medicae).